The following is a 44-amino-acid chain: MRDIKTYLSTAPVLATLWFGSLAGLLIEINRFFPDALTFPFFSF.

Residues 7–27 (YLSTAPVLATLWFGSLAGLLI) traverse the membrane as a helical segment.

Belongs to the PsaJ family.

Its subcellular location is the plastid. It is found in the chloroplast thylakoid membrane. May help in the organization of the PsaE and PsaF subunits. In Cycas taitungensis (Prince sago), this protein is Photosystem I reaction center subunit IX.